A 499-amino-acid chain; its full sequence is Endosomal/lysosomal proton channel TMEM175 (499 aa).

Residues 1–30 (MSRLQTEEQAVDSEGDSSLHRRNEEGTQSS) lie on the Cytoplasmic side of the membrane. A disordered region spans residues 1–30 (MSRLQTEEQAVDSEGDSSLHRRNEEGTQSS). Thr-6 carries the post-translational modification Phosphothreonine. A helical membrane pass occupies residues 31–53 (HRMLGFSDALLSIIATVMILPVT). The RxxxFSD motif 1 signature appears at 32–38 (RMLGFSD). The Lumenal segment spans residues 54-74 (HTEISPEQQFDKSIQKLLATR). The segment at 55-60 (TEISPE) is short helix H1-1. Residues 62 to 68 (QFDKSIQ) form a short helix H2-1 region. Residues 75 to 97 (IAVYLMTFLIVTVAWTAHTRLFQ) traverse the membrane as a helical segment. Over 98-103 (VVGKID) the chain is Cytoplasmic. Residues 104–125 (DTLALLNLACMMTITLLPYTFS) form a helical membrane-spanning segment. Residues 126 to 135 (LMVTFPDVPL) are Lumenal-facing. The chain crosses the membrane as a helical span at residues 136–157 (GIFLFCVCVIAIGSVQAMIVGY). Over 158–181 (AFHFPHLLNPQIQCSTHRDLSRRH) the chain is Cytoplasmic. The helical transmembrane segment at 182-202 (ILHLVLRGPALCFVAAVFSLF) threads the bilayer. Over 203 to 207 (FFPLS) the chain is Lumenal. Residues 208-227 (YLLMVTVIFLPHISKATTWC) form a helical membrane-spanning segment. Over 228 to 254 (KDKLMGQRESPAHDMEPFSIDLHAPLS) the chain is Cytoplasmic. The chain crosses the membrane as a helical span at residues 255 to 279 (KERVEAFSDGVYAIVATLLILDICE). The short motif at 257–263 (RVEAFSD) is the RxxxFSD motif 2 element. Over 280–306 (DNVPDPKDVQEKFSGSLVAALGAYGPQ) the chain is Lumenal. The short helix H1-2 stretch occupies residues 285–293 (PKDVQEKFS). Residues 295 to 301 (SLVAALG) are short helix H2-2. The chain crosses the membrane as a helical span at residues 307–329 (FLAYFGSFATVGLLWFAHHSLFL). Residues 330-335 (HVRKAT) are Cytoplasmic-facing. A helical transmembrane segment spans residues 336–357 (QTMGLLNILSLAFVGGLPLAYQ). Topologically, residues 358–372 (QTSAFARQPHDELER) are lumenal. The chain crosses the membrane as a helical span at residues 373-393 (VRVSCAIIFFASIFQFAIWTT). The Cytoplasmic segment spans residues 394 to 413 (ALLHQTETLQPAVQFGGQEH). The chain crosses the membrane as a helical span at residues 414–437 (AFMFAKLALYPCASLLAFAATCLL). At 438-439 (SR) the chain is on the lumenal side. Residues 440–466 (FSTAIFHLMQISVPFAFLLLRLLVRLA) form a helical membrane-spanning segment. Residues 467–499 (LAGLQVLRGLWPHHPQQDQSEPEAQSQLLPDPC) are Cytoplasmic-facing.

The protein belongs to the TMEM175 family. As to quaternary structure, homodimer. Interacts with AKT (AKT1, AKT2 or AKT3); leading to formation of the lysoK(GF) complex, which activates the channel. Interacts with LAMP1; inhibiting the proton channel activity of TMEM175. Interacts with LAMP2; inhibiting the proton channel activity of TMEM175.

It localises to the endosome membrane. The protein localises to the lysosome membrane. The enzyme catalyses H(+)(in) = H(+)(out). The catalysed reaction is K(+)(in) = K(+)(out). Its activity is regulated as follows. Active at low pH (under pH 4.6): proton channel activity is activated by luminal side protons. Polyunsaturated fatty acids, such as arachidonic acid, also activate the channel activity. Proton channel activity is directly inhibited by LAMP1 or LAMP2, facilitating lysosomal acidification. Channel activity is activated following interaction with AKT (AKT1, AKT2 or AKT3): interaction promotes activation from closed to an open state. Activation by AKT is independent of AKT serine/threonine-protein kinase activity. Its function is as follows. Proton-activated proton channel that catalyzes proton efflux from endosomes and lysosomes to maintain a steady-state pH. Activated at low pH (under pH 4.6) by luminal side protons: selectively mediates lysosomal proton release from lysosomes, eliciting a proton leak that balances V-ATPase activity to maintain pH homeostasis. Regulation of lumenal pH stability is required for autophagosome-lysosome fusion. Also acts as a potassium channel at higher pH, regulating potassium conductance in endosomes and lysosomes. Constitutes the pore-forming subunit of the lysoK(GF) complex, a complex activated by extracellular growth factors. The lysoK(GF) complex is composed of TMEM175 and AKT (AKT1, AKT2 or AKT3), a major target of growth factor receptors: in the complex, TMEM175 channel is opened by conformational changes by AKT, leading to its activation. The lysoK(GF) complex is required to protect neurons against stress-induced damage. This Mus musculus (Mouse) protein is Endosomal/lysosomal proton channel TMEM175.